A 115-amino-acid chain; its full sequence is Hydrogenase maturation factor HypA (115 aa).

His-2 contacts Ni(2+). Residues Cys-73, Cys-76, Cys-89, and Cys-92 each coordinate Zn(2+).

The protein belongs to the HypA/HybF family.

Functionally, involved in the maturation of [NiFe] hydrogenases. Required for nickel insertion into the metal center of the hydrogenase. This chain is Hydrogenase maturation factor HypA, found in Polaromonas naphthalenivorans (strain CJ2).